Consider the following 307-residue polypeptide: Malate dehydrogenase (307 aa).

NAD(+)-binding positions include 8–13 (GAGRVG) and Asp-33. The substrate site is built by Arg-82 and Arg-88. Residues Asn-95 and 118 to 120 (VSN) each bind NAD(+). Substrate is bound by residues Asn-120 and Arg-151. The active-site Proton acceptor is His-175.

The protein belongs to the LDH/MDH superfamily. MDH type 3 family.

The catalysed reaction is (S)-malate + NAD(+) = oxaloacetate + NADH + H(+). Its function is as follows. Catalyzes the reversible oxidation of malate to oxaloacetate. In Thioalkalivibrio sulfidiphilus (strain HL-EbGR7), this protein is Malate dehydrogenase.